Here is a 455-residue protein sequence, read N- to C-terminus: uncharacterized protein (455 aa).

Helical transmembrane passes span 19–39, 63–83, 106–126, 140–160, 173–195, 200–222, 265–285, 288–308, 324–344, 348–368, 388–408, and 410–430; these read FSLF…MFMG, ILNL…VIIS, FFIS…LLHM, FLQV…FSAI, VTIG…LFGF, VAGV…IVIV, MIVT…KVYT, ITMF…ILIG, MKSL…MTIF, LIGL…LIAM, AAGD…GIGL, and LAYL…ISFI.

The protein belongs to the multi antimicrobial extrusion (MATE) (TC 2.A.66.1) family.

It is found in the cell membrane. This is an uncharacterized protein from Bacillus subtilis (strain 168).